The primary structure comprises 297 residues: 4-hydroxy-tetrahydrodipicolinate synthase (297 aa).

Threonine 49 is a binding site for pyruvate. Residue tyrosine 137 is the Proton donor/acceptor of the active site. Lysine 166 acts as the Schiff-base intermediate with substrate in catalysis. Residue isoleucine 208 participates in pyruvate binding.

The protein belongs to the DapA family. As to quaternary structure, homotetramer; dimer of dimers.

The protein resides in the cytoplasm. The enzyme catalyses L-aspartate 4-semialdehyde + pyruvate = (2S,4S)-4-hydroxy-2,3,4,5-tetrahydrodipicolinate + H2O + H(+). It participates in amino-acid biosynthesis; L-lysine biosynthesis via DAP pathway; (S)-tetrahydrodipicolinate from L-aspartate: step 3/4. Functionally, catalyzes the condensation of (S)-aspartate-beta-semialdehyde [(S)-ASA] and pyruvate to 4-hydroxy-tetrahydrodipicolinate (HTPA). This chain is 4-hydroxy-tetrahydrodipicolinate synthase, found in Phocaeicola vulgatus (strain ATCC 8482 / DSM 1447 / JCM 5826 / CCUG 4940 / NBRC 14291 / NCTC 11154) (Bacteroides vulgatus).